A 543-amino-acid polypeptide reads, in one-letter code: Glucose-6-phosphate isomerase (543 aa).

Residue Glu-353 is the Proton donor of the active site. Catalysis depends on residues His-384 and Lys-512.

The protein belongs to the GPI family.

The protein localises to the cytoplasm. It carries out the reaction alpha-D-glucose 6-phosphate = beta-D-fructose 6-phosphate. It functions in the pathway carbohydrate biosynthesis; gluconeogenesis. Its pathway is carbohydrate degradation; glycolysis; D-glyceraldehyde 3-phosphate and glycerone phosphate from D-glucose: step 2/4. Functionally, catalyzes the reversible isomerization of glucose-6-phosphate to fructose-6-phosphate. The polypeptide is Glucose-6-phosphate isomerase (Christiangramia forsetii (strain DSM 17595 / CGMCC 1.15422 / KT0803) (Gramella forsetii)).